Here is a 216-residue protein sequence, read N- to C-terminus: Thymidylate kinase (216 aa).

ATP is bound at residue 10-17 (GIDGCGKT).

This sequence belongs to the thymidylate kinase family.

The enzyme catalyses dTMP + ATP = dTDP + ADP. Functionally, phosphorylation of dTMP to form dTDP in both de novo and salvage pathways of dTTP synthesis. This is Thymidylate kinase from Prochlorococcus marinus (strain MIT 9313).